The primary structure comprises 305 residues: MASPKHFLDLSAVGPQDLRTILDDARARKVATKAGTAEKPLAGKMLAMIFEKPSTRTRVSFDVGMRQLGGETLFLSGTEMQLGRAETIGDTAKVLSRYVDAIMIRTTDHSRLLELAEHATVPVINGLTDDTHPCQIMADIMTFEEHRGPVKGKTIAWTGDGNNVLHSFVEGSARFGYRMTMAVPMGSEPHDKFMNWARNNGGEIALYHDADKAVAGADCVVTDTWVSMNQEHKARGHNIFQPYQVNEALMAKAQKDALFMHCLPAHRGEEVTDAVIDGPQSVVFDEAENRLHAQKSVIAWCMGVI.

Residues 54-57 (STRT), glutamine 81, arginine 105, and 132-135 (HPCQ) each bind carbamoyl phosphate. L-ornithine contacts are provided by residues asparagine 163, aspartate 223, and 227–228 (SM). Residues 262 to 263 (CL) and arginine 290 contribute to the carbamoyl phosphate site.

Belongs to the aspartate/ornithine carbamoyltransferase superfamily. OTCase family.

Its subcellular location is the cytoplasm. The catalysed reaction is carbamoyl phosphate + L-ornithine = L-citrulline + phosphate + H(+). It functions in the pathway amino-acid biosynthesis; L-arginine biosynthesis; L-arginine from L-ornithine and carbamoyl phosphate: step 1/3. Its function is as follows. Reversibly catalyzes the transfer of the carbamoyl group from carbamoyl phosphate (CP) to the N(epsilon) atom of ornithine (ORN) to produce L-citrulline. This is Ornithine carbamoyltransferase from Agrobacterium fabrum (strain C58 / ATCC 33970) (Agrobacterium tumefaciens (strain C58)).